An 88-amino-acid chain; its full sequence is Small ribosomal subunit protein bS20 (88 aa).

The protein belongs to the bacterial ribosomal protein bS20 family.

Binds directly to 16S ribosomal RNA. The sequence is that of Small ribosomal subunit protein bS20 from Micrococcus luteus (strain ATCC 4698 / DSM 20030 / JCM 1464 / CCM 169 / CCUG 5858 / IAM 1056 / NBRC 3333 / NCIMB 9278 / NCTC 2665 / VKM Ac-2230) (Micrococcus lysodeikticus).